We begin with the raw amino-acid sequence, 60 residues long: MANLRITLVKSLIGRPETERKTARAMGLKKLHRQVVCPDTPVTRGQVQKLAHLVRVESIE.

This sequence belongs to the universal ribosomal protein uL30 family. Part of the 50S ribosomal subunit.

This Moorella thermoacetica (strain ATCC 39073 / JCM 9320) protein is Large ribosomal subunit protein uL30.